The primary structure comprises 318 residues: Protoheme IX farnesyltransferase (318 aa).

Transmembrane regions (helical) follow at residues 34–54 (VMSLVVFTAFAGLVLAPGQIN), 55–75 (PVIGFIAILCIAIGAGASGAL), 95–115 (IPAGKILPQEALAFGLTLSAF), 118–138 (IILGLAVNWLAAGLLAFTIFF), 155–175 (IVIGGAAGAFPPMIGWACVTG), 182–202 (IVLFLIIFLWTPAHFWALALF), 228–250 (IVVYALLTALSGICPTLLGFASL), 254–273 (AFATALGLGFIWYSLAVLRM), and 287–307 (FAFSIAYLFAIFSALLVDYMI).

Belongs to the UbiA prenyltransferase family. Protoheme IX farnesyltransferase subfamily.

Its subcellular location is the cell inner membrane. It carries out the reaction heme b + (2E,6E)-farnesyl diphosphate + H2O = Fe(II)-heme o + diphosphate. Its pathway is porphyrin-containing compound metabolism; heme O biosynthesis; heme O from protoheme: step 1/1. Functionally, converts heme B (protoheme IX) to heme O by substitution of the vinyl group on carbon 2 of heme B porphyrin ring with a hydroxyethyl farnesyl side group. The polypeptide is Protoheme IX farnesyltransferase (Sinorhizobium fredii (strain NBRC 101917 / NGR234)).